Consider the following 2131-residue polypeptide: Sodium channel protein para (2131 aa).

At 1–148 (MTEDSDSISE…FNPIRRVAIY (148 aa)) the chain is on the cytoplasmic side. Over residues 35–48 (HEKQKELERKRAEG) the composition is skewed to basic and acidic residues. Positions 35-84 (HEKQKELERKRAEGEVPQYGRKKKQKEIRYDDEDEDEGPQPDPTLEQGVP) are disordered. A compositionally biased stretch (acidic residues) spans 64 to 73 (YDDEDEDEGP). The stretch at 134–467 (WMLDPFNPIR…AAKAAKLEER (334 aa)) is one I repeat. The chain crosses the membrane as a helical span at residues 149–172 (ILVHPLFSLFIITTILVNCILMIM). Topologically, residues 173-180 (PTTPTVES) are extracellular. Residues 181-199 (TEVIFTGIYTFESAVKVMA) form a helical membrane-spanning segment. Topologically, residues 200–212 (RGFILCPFTYLRD) are cytoplasmic. Residues 213–231 (AWNWLDFVVIALAYVTMGI) form a helical membrane-spanning segment. Residues 232–237 (DLGNLA) lie on the Extracellular side of the membrane. A helical; Voltage-sensor membrane pass occupies residues 238–257 (ALRTFRVLRALKTVAIVPGL). Topologically, residues 258–273 (KTIVGAVIESVKNLRD) are cytoplasmic. The chain crosses the membrane as a helical span at residues 274-297 (VIILTMFSLSVFALMGLQIYMGVL). Topologically, residues 298–373 (TQKCIKKFPL…PNYGYTSFDS (76 aa)) are extracellular. Residues Cys301 and Cys350 are joined by a disulfide bond. N-linked (GlcNAc...) asparagine glycans are attached at residues Asn313, Asn325, and Asn343. Residues 374–398 (FGWAFLSAFRLMTQDFWEDLYQLVL) constitute an intramembrane region (pore-forming). At 399-405 (RAAGPWH) the chain is on the extracellular side. A helical membrane pass occupies residues 406-427 (MLFFIVIIFLGSFYLVNLILAI). Residues 428–812 (VAMSYDELQK…VWLKFQEWVS (385 aa)) lie on the Cytoplasmic side of the membrane. A phosphoserine; by PKA mark is found at Ser553 and Ser570. 2 disordered regions span residues 553-572 (STTS…GSRS) and 671-691 (KESK…TNGG). The span at 680 to 691 (TRNQSVGATNGG) shows a compositional bias: polar residues. The stretch at 799-1069 (DCCWVWLKFQ…IAEAFNRIGR (271 aa)) is one II repeat. A helical transmembrane segment spans residues 813–837 (LIVFDPFVELFITLCIVVNTMFMAM). Topologically, residues 838 to 848 (DHHDMNKEMER) are extracellular. The chain crosses the membrane as a helical span at residues 849 to 873 (VLKSGNYFFTATFAIEATMKLMAMS). Residues 874–880 (PKYYFQE) are Cytoplasmic-facing. Residues 881–900 (GWNIFDFIIVALSLLELGLE) form a helical membrane-spanning segment. Residues 901 to 906 (GVQGLS) lie on the Extracellular side of the membrane. A helical; Voltage-sensor transmembrane segment spans residues 907 to 926 (VLRSFRLLRVFKLAKSWPTL). The Cytoplasmic portion of the chain corresponds to 927 to 941 (NLLISIMGRTMGALG). The chain crosses the membrane as a helical span at residues 942 to 963 (NLTFVLCIIIFIFAVMGMQLFG). Residues 964 to 985 (KNYHDHKDRFPDGDLPRWNFTD) are Extracellular-facing. An N-linked (GlcNAc...) asparagine glycan is attached at Asn982. Positions 986-1006 (FMHSFMIVFRVLCGEWIESMW) form an intramembrane region, pore-forming. The Extracellular segment spans residues 1007-1013 (DCMYVGD). An intrachain disulfide couples Cys1008 to Cys1016. Residues 1014 to 1041 (VSCIPFFLATVVIGNLVVLNLFLALLLS) form a helical membrane-spanning segment. The Cytoplasmic segment spans residues 1042 to 1296 (NFGSSSLSAP…WGNLRLKTFQ (255 aa)). A disordered region spans residues 1166 to 1240 (DMKNNKPKKS…LDEEGECEEG (75 aa)). Polar residues predominate over residues 1177-1194 (YLNNATDDDTASINSYGS). Basic and acidic residues predominate over residues 1199–1225 (PFKDESHKGSAETMEGEEKRDASKEDL). The span at 1226-1240 (GLDEELDEEGECEEG) shows a compositional bias: acidic residues. One copy of the III repeat lies at 1284-1591 (WQGWGNLRLK…QKKYYNAMKK (308 aa)). A helical transmembrane segment spans residues 1297-1320 (LIENKYFETAVITMILMSSLALAL). The Extracellular portion of the chain corresponds to 1321–1334 (EDVHLPQRPILQDI). A helical membrane pass occupies residues 1335 to 1359 (LYYMDRIFTVIFFLEMLIKWLALGF). Topologically, residues 1360-1365 (KVYFTN) are cytoplasmic. Residues 1366–1387 (AWCWLDFVIVMVSLINFVASLV) form a helical membrane-spanning segment. Over 1388-1391 (GAGG) the chain is Extracellular. Residues 1392 to 1413 (IQAFKTMRTLRALRPLRAMSRM) traverse the membrane as a helical; Voltage-sensor segment. Residues 1414-1432 (QGMRVVVNALVQAIPSIFN) are Cytoplasmic-facing. A helical transmembrane segment spans residues 1433–1454 (VLLVCLIFWLIFAIMGVQLFAG). The Extracellular segment spans residues 1455 to 1495 (KYFKCEDMNGTKLSHEIIPNRNACESENYTWVNSAMNFDHV). Residues Asn1463 and Asn1482 are each glycosylated (N-linked (GlcNAc...) asparagine). An intramembrane region (pore-forming) is located at residues 1496–1517 (GNAYLCLFQVATFKGWIQIMND). Residues 1518–1533 (AIDSREVDKQPIRETN) are Extracellular-facing. A helical transmembrane segment spans residues 1534–1560 (IYMYLYFVFFIIFGSFFTLNLFIGVII). Residues 1561-1614 (DNFNEQKKKAGGSLEMFMTEDQKKYYNAMKKMGSKKPLKAIPRPRWRPQAIVFE) lie on the Cytoplasmic side of the membrane. The IV repeat unit spans residues 1601–1862 (IPRPRWRPQA…NMYIAVILEN (262 aa)). A helical transmembrane segment spans residues 1615–1638 (IVTDKKFDIIIMLFIGLNMFTMTL). Over 1639–1649 (DRYDASDTYNA) the chain is Extracellular. The chain crosses the membrane as a helical span at residues 1650 to 1673 (VLDYLNAIFVVIFSSECLLKIFAL). Residues 1674–1679 (RYHYFI) lie on the Cytoplasmic side of the membrane. The chain crosses the membrane as a helical span at residues 1680–1703 (EPWNLFDVVVVILSILGLVLSDII). Topologically, residues 1704–1713 (EKYFVSPTLL) are extracellular. The chain crosses the membrane as a helical; Voltage-sensor span at residues 1714–1735 (RVVRVAKVGRVLRLVKGAKGIR). At 1736–1750 (TLLFALAMSLPALFN) the chain is on the cytoplasmic side. The chain crosses the membrane as a helical span at residues 1751 to 1773 (ICLLLFLVMFIFAIFGMSFFMHV). Topologically, residues 1774–1787 (KEKSGINDVYNFKT) are extracellular. Positions 1788–1810 (FGQSMILLFQMSTSAGWDGVLDA) form an intramembrane region, pore-forming. Over 1811-1835 (IINEEACDPPDNDKGYPGNCGSATV) the chain is Extracellular. A helical transmembrane segment spans residues 1836 to 1860 (GITFLLSYLVISFLIVINMYIAVIL). At 1861-2131 (ENYSQATEDV…PSITSRTADV (271 aa)) the chain is on the cytoplasmic side. Positions 1877–1912 (DDYDMYYEIWQQFDPEGTQYIRYDQLSEFLDVLEPP) constitute an EF-hand domain. A disordered region spans residues 2001–2096 (HKARGEGGGS…GSPGAGSAGR (96 aa)). Positions 2021–2035 (GDPDAGDPAPDEATD) are enriched in acidic residues. The segment covering 2068-2088 (AAAAAAAAAAAAAAGTTTAGS) has biased composition (low complexity).

The protein belongs to the sodium channel (TC 1.A.1.10) family. Para subfamily.

Its subcellular location is the cell membrane. Functionally, mediates the voltage-dependent sodium ion permeability of excitable membranes. Assuming opened or closed conformations in response to the voltage difference across the membrane, the protein forms a sodium-selective channel through which Na(+) ions may pass in accordance with their electrochemical gradient. This Drosophila melanogaster (Fruit fly) protein is Sodium channel protein para (para).